Reading from the N-terminus, the 325-residue chain is L-lactate dehydrogenase 1 (325 aa).

Residues Val17, Asp38, Lys43, Tyr68, and 82–83 each bind NAD(+); that span reads GA. Residues Gln85, Arg91, and 123 to 126 contribute to the substrate site; that span reads NPVD. NAD(+)-binding positions include 121–123 and Ser146; that span reads AAN. 151–154 is a substrate binding site; it reads DTAR. The beta-D-fructose 1,6-bisphosphate site is built by Arg156 and His171. His178 acts as the Proton acceptor in catalysis. At Tyr223 the chain carries Phosphotyrosine. Substrate is bound at residue Thr232.

This sequence belongs to the LDH/MDH superfamily. LDH family. Homotetramer.

The protein localises to the cytoplasm. The catalysed reaction is (S)-lactate + NAD(+) = pyruvate + NADH + H(+). It functions in the pathway fermentation; pyruvate fermentation to lactate; (S)-lactate from pyruvate: step 1/1. Allosterically activated by fructose 1,6-bisphosphate (FBP). Catalyzes the conversion of lactate to pyruvate. This Lactococcus lactis subsp. lactis (strain IL1403) (Streptococcus lactis) protein is L-lactate dehydrogenase 1.